The primary structure comprises 833 residues: Bifunctional dethiobiotin synthetase/7,8-diamino-pelargonic acid aminotransferase, mitochondrial (833 aa).

Residues 1 to 23 (MIPVTATLIRHRLRHLRHRIRFK) constitute a mitochondrion transit peptide. Residues 36–299 (HPTYLIWSAN…VLVLPPVPKD (264 aa)) are dethiobiotin synthetase. Residue 47–52 (SLGKTL) participates in ATP binding. A Mg(2+)-binding site is contributed by Thr51. Thr81 serves as a coordination point for substrate. Asp88 contacts Mg(2+). ATP is bound by residues Asp97, 210–213 (ETAG), and 270–271 (ED). Position 210 (Glu210) interacts with Mg(2+). A 7,8-diamino-pelargonic acid aminotransferase region spans residues 332–830 (RLNGMAKLAG…TKLYKRLGEF (499 aa)). 391–392 (WW) lines the (8S)-8-amino-7-oxononanoate pocket. 453–454 (GS) contributes to the pyridoxal 5'-phosphate binding site. Tyr495 is a binding site for (8S)-8-amino-7-oxononanoate. Residues 518–520 (PWY) and Glu545 each bind ATP. Asp637 provides a ligand contact to pyridoxal 5'-phosphate. Residues Lys666 and Gly700 each contribute to the (8S)-8-amino-7-oxononanoate site. Lys666 is modified (N6-(pyridoxal phosphate)lysine). Residue 701–702 (HS) participates in pyridoxal 5'-phosphate binding. A (8S)-8-amino-7-oxononanoate-binding site is contributed by Arg797.

The protein in the N-terminal section; belongs to the dethiobiotin synthetase family. It in the C-terminal section; belongs to the class-III pyridoxal-phosphate-dependent aminotransferase family. BioA subfamily. Homodimer. It depends on Mg(2+) as a cofactor. Pyridoxal 5'-phosphate is required as a cofactor.

Its subcellular location is the mitochondrion matrix. The enzyme catalyses (7R,8S)-7,8-diammoniononanoate + CO2 + ATP = (4R,5S)-dethiobiotin + ADP + phosphate + 3 H(+). The catalysed reaction is (8S)-8-amino-7-oxononanoate + S-adenosyl-L-methionine = S-adenosyl-4-methylsulfanyl-2-oxobutanoate + (7R,8S)-7,8-diammoniononanoate. The protein operates within cofactor biosynthesis; biotin biosynthesis; biotin from 7,8-diaminononanoate: step 1/2. It functions in the pathway cofactor biosynthesis; biotin biosynthesis; 7,8-diaminononanoate from 8-amino-7-oxononanoate (SAM route): step 1/1. In terms of biological role, bifunctional enzyme that catalyzes two different reactions involved in the biotin biosynthesis. Functionally, catalyzes a mechanistically unusual reaction, the ATP-dependent insertion of CO2 between the N7 and N8 nitrogen atoms of 7,8-diaminopelargonic acid (DAPA) to form an ureido ring. Its function is as follows. Catalyzes the transfer of the alpha-amino group from S-adenosyl-L-methionine (SAM) to 7-keto-8-aminopelargonic acid (KAPA) to form 7,8-diaminopelargonic acid (DAPA). It is the only aminotransferase known to utilize SAM as an amino donor. This Arabidopsis thaliana (Mouse-ear cress) protein is Bifunctional dethiobiotin synthetase/7,8-diamino-pelargonic acid aminotransferase, mitochondrial.